Consider the following 349-residue polypeptide: Mitogen-activated protein kinase sty1 (349 aa).

Residues 20–299 enclose the Protein kinase domain; sequence YSDLQPIGMG…AADALAHNYL (280 aa). ATP contacts are provided by residues 26–34 and Lys-49; that span reads IGMGAFGLV. Asp-141 functions as the Proton acceptor in the catalytic mechanism. A Phosphothreonine modification is found at Thr-171. The short motif at 171–173 is the TXY element; the sequence is TGY. Tyr-173 bears the Phosphotyrosine mark. Ser-175 is modified (phosphoserine). Thr-176 bears the Phosphothreonine mark. Positions 176-178 match the TXY motif; it reads TRY.

It belongs to the protein kinase superfamily. Ser/Thr protein kinase family. MAP kinase subfamily. HOG1 sub-subfamily. In terms of assembly, interacts with cdc37, cmk2, hal4, sin1 and srk1. It depends on Mg(2+) as a cofactor. In terms of processing, dually phosphorylated on Thr-171 and Tyr-173, which activates the enzyme. Phosphorylated by wis1 in response to osmotic stress, nutrient limitation, hydrogen peroxide and arsenite. Dephosphorylated by pyp1 and pyp2.

It is found in the cytoplasm. The protein resides in the nucleus. It carries out the reaction L-seryl-[protein] + ATP = O-phospho-L-seryl-[protein] + ADP + H(+). The catalysed reaction is L-threonyl-[protein] + ATP = O-phospho-L-threonyl-[protein] + ADP + H(+). Activated by the MAPK kinase wisl, and negatively regulated by pypl and pyp2 tyrosine phosphatases. Its function is as follows. Proline-directed serine/threonine-protein kinase involved in a signal transduction pathway that is activated by changes in the osmolarity of the extracellular environment. Controls osmotic regulation of transcription of target genes. Involved in osmoregulation and stress response pathways leading to an efficient start of sexual differentiation. Supports translation initiation and facilitates adaptation to environmental stress in part through reducing eIF2-alpha phosphorylation. Links the cell-cycle G2/M control with changes in the extracellular environment that affect cell physiology. Phosphorylates atf1 and mkp1. In conjunction with hal4, has a role in the cellular resistance to toxic cations such as Na(+), Li(+) and Ca(2+). Involved in resistance to arsenite, methylglyoxal and hydrogen peroxide. Involved in induction of thermotolerance in mRNA export, as well as in vacuolar fission. The polypeptide is Mitogen-activated protein kinase sty1 (sty1) (Schizosaccharomyces pombe (strain 972 / ATCC 24843) (Fission yeast)).